The primary structure comprises 852 residues: Genome polyprotein (852 aa).

Short sequence motifs ((L)YPX(n)L motif) lie at residues 167–171 (YPHGL) and 200–205 (YPVWEL). The tract at residues 766–836 (MMSRIAAGDL…PRKMKGLFSQ (71 aa)) is involved in P1-2A pentamerization.

It belongs to the picornaviridae polyprotein family. In terms of assembly, homodimer. Homomultimer; probably interacts with membranes in a multimeric form. Seems to assemble into amyloid-like fibers. As to quaternary structure, homopentamer. Homooligomer. Interacts with capsid protein VP2. Interacts with capsid protein VP3. In terms of assembly, interacts with capsid protein VP1. Interacts with capsid protein VP3. As to quaternary structure, interacts with capsid protein VP1. Interacts with capsid protein VP2. Specific enzymatic cleavages by viral protease in vivo yield a variety of precursors and mature proteins. Polyprotein processing intermediates are produced, such as P1-2A which is a functional precursor of the structural proteins, VP0 which is a VP4-VP2 precursor, VP1-2A precursor, 3ABC precursor which is a stable and catalytically active precursor of 3A, 3B and 3C proteins, 3AB and 3CD precursors. The assembly signal 2A is removed from VP1-2A by a host protease, possibly host Cathepsin L. This cleavage occurs over a region of 3 amino-acids probably generating VP1 proteins with heterogeneous C-termini. Post-translationally, during virion maturation, immature virions are rendered infectious following cleavage of VP0 into VP4 and VP2. This maturation seems to be an autocatalytic event triggered by the presence of RNA in the capsid and is followed by a conformational change of the particle. In terms of processing, the assembly signal 2A is removed from VP1-2A by a host protease, possibly host Cathepsin L in naked virions. This cleavage does not occur in enveloped virions. This cleavage occurs over a region of 3 amino-acids probably generating VP1 proteins with heterogeneous C-termini. Viral protein genome-linked: VPg is uridylylated prior to priming replication into VPg-pUpU. Post-translationally, unlike other picornaviruses, does not seem to be myristoylated.

The protein localises to the virion. Its subcellular location is the host endosome. It is found in the host multivesicular body. The protein resides in the host membrane. Capsid proteins VP1, VP2, and VP3 form a closed capsid enclosing the viral positive strand RNA genome. All these proteins contain a beta-sheet structure called beta-barrel jelly roll. Together they form an icosahedral capsid (T=3) composed of 60 copies of each VP1, VP2, and VP3, with a diameter of approximately 300 Angstroms. VP1 is situated at the 12 fivefold axes, whereas VP2 and VP3 are located at the quasi-sixfold axes. The naked capsid interacts with the host receptor HAVCR1 to provide virion attachment to and probably entry into the target cell. Its function is as follows. VP0 precursor is a component of the immature procapsids. In terms of biological role, plays a role in the assembly of the 12 pentamers into an icosahedral structure. Has not been detected in mature virions, supposedly owing to its small size. Functionally, precursor component of immature procapsids that corresponds to an extended form of the structural protein VP1. After maturation, possibly by the host Cathepsin L, the assembly signal 2A is cleaved to give rise to the mature VP1 protein. Affects membrane integrity and causes an increase in membrane permeability. Its function is as follows. Functions as a viroporin. Affects membrane integrity and causes an increase in membrane permeability. Involved in host intracellular membrane rearrangements probably to give rise to the viral factories. Does not disrupt calcium homeostasis or glycoprotein trafficking. Antagonizes the innate immune response of the host by suppressing IFN-beta synthesis, which it achieves by interfering with the RIG-I/IFIH1 pathway. The chain is Genome polyprotein from Cercopithecus hamlyni (Owl-faced monkey).